A 386-amino-acid chain; its full sequence is Formate-dependent phosphoribosylglycinamide formyltransferase (386 aa).

N(1)-(5-phospho-beta-D-ribosyl)glycinamide is bound by residues 15–16 and Glu75; that span reads EL. ATP contacts are provided by residues Arg107, Lys148, 153-158, 188-191, and Glu196; these read SSGKGQ and EQFI. Positions 112–301 constitute an ATP-grasp domain; the sequence is ALAVQQLNLQ…EFELHLRAIV (190 aa). Residues Glu260 and Glu272 each contribute to the Mg(2+) site. N(1)-(5-phospho-beta-D-ribosyl)glycinamide is bound by residues Asp279, Lys349, and 356–357; that span reads RR.

Belongs to the PurK/PurT family. As to quaternary structure, homodimer.

It catalyses the reaction N(1)-(5-phospho-beta-D-ribosyl)glycinamide + formate + ATP = N(2)-formyl-N(1)-(5-phospho-beta-D-ribosyl)glycinamide + ADP + phosphate + H(+). Its pathway is purine metabolism; IMP biosynthesis via de novo pathway; N(2)-formyl-N(1)-(5-phospho-D-ribosyl)glycinamide from N(1)-(5-phospho-D-ribosyl)glycinamide (formate route): step 1/1. Its function is as follows. Involved in the de novo purine biosynthesis. Catalyzes the transfer of formate to 5-phospho-ribosyl-glycinamide (GAR), producing 5-phospho-ribosyl-N-formylglycinamide (FGAR). Formate is provided by PurU via hydrolysis of 10-formyl-tetrahydrofolate. The sequence is that of Formate-dependent phosphoribosylglycinamide formyltransferase from Francisella tularensis subsp. holarctica (strain LVS).